The chain runs to 1328 residues: ABC transporter G family member 2 (1328 aa).

The ABC transporter 1 domain maps to 53–299 (VTARNLSMSI…FEGLGFKLPK (247 aa)). Position 91–98 (91–98 (GSPGCGKT)) interacts with ATP. The 278-residue stretch at 388–665 (ISSQVAVRMR…FGMYFFLKNV (278 aa)) folds into the ABC transmembrane type-2 1 domain. Transmembrane regions (helical) follow at residues 398 to 418 (IIKS…LDLN), 428 to 448 (LIFF…AILF), 477 to 497 (IPIA…MCGL), 504 to 524 (FIYF…FFKM), 534 to 554 (LASV…GFMA), 559 to 579 (IGGW…FEGL), and 642 to 662 (IDLL…YFFL). Residues 670–691 (RASDPKNDKRSKKASKRSKKIK) are disordered. Basic residues predominate over residues 678-689 (KRSKKASKRSKK). One can recognise an ABC transporter 2 domain in the interval 721 to 960 (VYEVDVKKDG…DLLGYFENHG (240 aa)). 755–762 (GPSGAGKS) is an ATP binding site. Residues 1049–1286 (VRRVQNIRTR…PICPITNGNQ (238 aa)) enclose the ABC transmembrane type-2 2 domain. The next 6 membrane-spanning stretches (helical) occupy residues 1059 to 1076 (LMRS…FVRM), 1087 to 1107 (VSIL…SIPI), 1128 to 1148 (IYLF…AIIY), 1172 to 1192 (FISF…ATVL), 1197 to 1217 (IAHA…GFMI), and 1303 to 1323 (AVIF…LKFI).

This sequence belongs to the ABC transporter superfamily. ABCG family. PDR (TC 3.A.1.205) subfamily.

Its subcellular location is the endosome membrane. Its function is as follows. Required for endocytosis and endosomal pH regulation. This Dictyostelium discoideum (Social amoeba) protein is ABC transporter G family member 2 (abcG2).